Consider the following 91-residue polypeptide: UPF0250 protein PputGB1_4855 (91 aa).

The protein belongs to the UPF0250 family.

The protein is UPF0250 protein PputGB1_4855 of Pseudomonas putida (strain GB-1).